An 871-amino-acid polypeptide reads, in one-letter code: Translation initiation factor IF-2 (871 aa).

Disordered regions lie at residues K60–K101 and E184–S203. Positions K61 to K72 are enriched in basic residues. Residues K73 to K101 show a composition bias toward basic and acidic residues. Positions T370–E537 constitute a tr-type G domain. Positions G379–T386 are G1. G379–T386 lines the GTP pocket. The interval G404–H408 is G2. A G3 region spans residues D425–G428. Residues D425–H429 and N479–D482 each bind GTP. Positions N479–D482 are G4. Residues S515 to K517 form a G5 region.

Belongs to the TRAFAC class translation factor GTPase superfamily. Classic translation factor GTPase family. IF-2 subfamily.

It is found in the cytoplasm. In terms of biological role, one of the essential components for the initiation of protein synthesis. Protects formylmethionyl-tRNA from spontaneous hydrolysis and promotes its binding to the 30S ribosomal subunits. Also involved in the hydrolysis of GTP during the formation of the 70S ribosomal complex. This is Translation initiation factor IF-2 from Campylobacter jejuni subsp. jejuni serotype O:6 (strain 81116 / NCTC 11828).